The sequence spans 169 residues: Tumor suppressor ARF (169 aa).

An interaction with CDK5RAP3 and MDM2 region spans residues 1-63; the sequence is MGRRFLVTVR…RRGPHRNPGP (63 aa). A disordered region spans residues 54 to 73; the sequence is RRGPHRNPGPGDDDGQRSRS.

As to quaternary structure, does not interact with cyclins, CDK1, CDK2, CDK4, CDK5 or CDK6. Interacts with COMMD1. Binds to BCL6, E2F1, HUWE1, MDM2, MYC, NPM1/B23, TOP1/TOPOI and UBE2I/UBC9. Interacts with TBRG1. Interacts with CDKN2AIP and E4F1. Interacts with CDK5RAP3 and MDM2; form a ternary complex involved in regulation of p53/TP53. Interacts with NOP53; the interaction is direct and promotes ARF nucleoplasmic relocalization and ubiquitin-mediated proteasomal degradation. Interacts with TTF1 (via the N-terminal region (NRD) and a C-terminal region); the interaction is direct and inhibits the nucleolar localization of TTF1. Interacts with C1QBP. Ubiquitinated in normal cells by TRIP12 via the ubiquitin fusion degradation (UFD) pathway, a process that mediates ubiquitination at the N-terminus, regardless of the absence of lysine residues. Ubiquitination leads to its proteasomal degradation. In cancer cells, however, TRIP12 is located in a different cell compartment, preventing ubiquitination and degradation.

It is found in the nucleus. The protein resides in the nucleolus. The protein localises to the nucleoplasm. Its subcellular location is the mitochondrion. Its function is as follows. Capable of inducing cell cycle arrest in G1 and G2 phases. Acts as a tumor suppressor. Binds to MDM2 and blocks its nucleocytoplasmic shuttling by sequestering it in the nucleolus. This inhibits the oncogenic action of MDM2 by blocking MDM2-induced degradation of p53 and enhancing p53-dependent transactivation and apoptosis. Also induces G2 arrest and apoptosis in a p53-independent manner by preventing the activation of cyclin B1/CDC2 complexes. Binds to BCL6 and down-regulates BCL6-induced transcriptional repression. Binds to E2F1 and MYC and blocks their transcriptional activator activity but has no effect on MYC transcriptional repression. Binds to TOP1/TOPOI and stimulates its activity. This complex binds to rRNA gene promoters and may play a role in rRNA transcription and/or maturation. Interacts with NPM1/B23 and promotes its polyubiquitination and degradation, thus inhibiting rRNA processing. Plays a role in inhibiting ribosome biogenesis, perhaps by binding to the nucleolar localization sequence of transcription termination factor TTF1, and thereby preventing nucleolar localization of TTF1. Interacts with COMMD1 and promotes its 'Lys63'-linked polyubiquitination. Interacts with UBE2I/UBC9 and enhances sumoylation of a number of its binding partners including MDM2 and E2F1. Binds to HUWE1 and represses its ubiquitin ligase activity. May play a role in controlling cell proliferation and apoptosis during mammary gland development. May be involved in regulation of autophagy and caspase-independent cell death; the short-lived mitochondrial isoform is stabilized by C1QBP. This is Tumor suppressor ARF from Mus musculus (Mouse).